A 477-amino-acid chain; its full sequence is Ribulose bisphosphate carboxylase large chain (477 aa).

Residues 1–2 (MS) constitute a propeptide that is removed on maturation. The residue at position 3 (P3) is an N-acetylproline. At K14 the chain carries N6,N6,N6-trimethyllysine. Residues N123 and T173 each coordinate substrate. The active-site Proton acceptor is K175. K177 contributes to the substrate binding site. Positions 201, 203, and 204 each coordinate Mg(2+). Position 201 is an N6-carboxylysine (K201). The active-site Proton acceptor is the H294. Substrate is bound by residues R295, H327, and S379.

This sequence belongs to the RuBisCO large chain family. Type I subfamily. As to quaternary structure, heterohexadecamer of 8 large chains and 8 small chains; disulfide-linked. The disulfide link is formed within the large subunit homodimers. The cofactor is Mg(2+). In terms of processing, the disulfide bond which can form in the large chain dimeric partners within the hexadecamer appears to be associated with oxidative stress and protein turnover.

The protein localises to the plastid. The protein resides in the chloroplast. The catalysed reaction is 2 (2R)-3-phosphoglycerate + 2 H(+) = D-ribulose 1,5-bisphosphate + CO2 + H2O. It carries out the reaction D-ribulose 1,5-bisphosphate + O2 = 2-phosphoglycolate + (2R)-3-phosphoglycerate + 2 H(+). Its function is as follows. RuBisCO catalyzes two reactions: the carboxylation of D-ribulose 1,5-bisphosphate, the primary event in carbon dioxide fixation, as well as the oxidative fragmentation of the pentose substrate in the photorespiration process. Both reactions occur simultaneously and in competition at the same active site. The polypeptide is Ribulose bisphosphate carboxylase large chain (rbcL) (Solanum lycopersicum (Tomato)).